The chain runs to 545 residues: Esterase-5C (545 aa).

Positions 1–19 (MLAARLIILLSFYWLSASA) are cleaved as a signal peptide. The cysteines at positions 84 and 103 are disulfide-linked. Asn113 carries an N-linked (GlcNAc...) asparagine glycan. Ser207 acts as the Acyl-ester intermediate in catalysis. Cys259 and Cys271 are oxidised to a cystine. An N-linked (GlcNAc...) asparagine glycan is attached at Asn421. His467 (charge relay system) is an active-site residue. Asn507 is a glycosylation site (N-linked (GlcNAc...) asparagine). Cys515 and Cys536 form a disulfide bridge.

It belongs to the type-B carboxylesterase/lipase family.

It localises to the secreted. It carries out the reaction a carboxylic ester + H2O = an alcohol + a carboxylate + H(+). The polypeptide is Esterase-5C (Est-5C) (Drosophila miranda (Fruit fly)).